The sequence spans 30 residues: Brevinin-2Ej (30 aa).

A disulfide bridge links cysteine 24 with cysteine 30.

Expressed by the skin glands.

Its subcellular location is the secreted. In terms of biological role, shows antibacterial activity against representative Gram-negative and Gram-positive bacterial species, and hemolytic activity. The protein is Brevinin-2Ej of Pelophylax ridibundus (Marsh frog).